The chain runs to 348 residues: Anthranilate phosphoribosyltransferase (348 aa).

Residues glycine 81, 84-85 (GD), threonine 89, 91-94 (NIST), 109-117 (KHGNRSSSG), and serine 121 contribute to the 5-phospho-alpha-D-ribose 1-diphosphate site. Residue glycine 81 coordinates anthranilate. Mg(2+) is bound at residue serine 93. Asparagine 112 is an anthranilate binding site. Arginine 167 serves as a coordination point for anthranilate. Positions 226 and 227 each coordinate Mg(2+).

This sequence belongs to the anthranilate phosphoribosyltransferase family. In terms of assembly, homodimer. Mg(2+) serves as cofactor.

The enzyme catalyses N-(5-phospho-beta-D-ribosyl)anthranilate + diphosphate = 5-phospho-alpha-D-ribose 1-diphosphate + anthranilate. Its pathway is amino-acid biosynthesis; L-tryptophan biosynthesis; L-tryptophan from chorismate: step 2/5. Functionally, catalyzes the transfer of the phosphoribosyl group of 5-phosphorylribose-1-pyrophosphate (PRPP) to anthranilate to yield N-(5'-phosphoribosyl)-anthranilate (PRA). The protein is Anthranilate phosphoribosyltransferase of Nitrosopumilus maritimus (strain SCM1).